The following is a 215-amino-acid chain: Thymidylate kinase (215 aa).

Residue 10–17 (GGEGVGKT) coordinates ATP.

The protein belongs to the thymidylate kinase family.

The enzyme catalyses dTMP + ATP = dTDP + ADP. Phosphorylation of dTMP to form dTDP in both de novo and salvage pathways of dTTP synthesis. The polypeptide is Thymidylate kinase (Bartonella henselae (strain ATCC 49882 / DSM 28221 / CCUG 30454 / Houston 1) (Rochalimaea henselae)).